Here is a 237-residue protein sequence, read N- to C-terminus: Ribonuclease 3 (237 aa).

The 129-residue stretch at 7-135 folds into the RNase III domain; sequence IKEVEAKLKF…ILGAVYLDGG (129 aa). Residue Glu48 coordinates Mg(2+). Asp52 is a catalytic residue. Residues Asn121 and Glu124 each coordinate Mg(2+). The active site involves Glu124. The 70-residue stretch at 160 to 229 folds into the DRBM domain; it reads NPKNRLQQLT…AQEALDANDY (70 aa).

Belongs to the ribonuclease III family. In terms of assembly, homodimer. Mg(2+) is required as a cofactor.

The protein localises to the cytoplasm. It carries out the reaction Endonucleolytic cleavage to 5'-phosphomonoester.. In terms of biological role, digests double-stranded RNA. Involved in the processing of primary rRNA transcript to yield the immediate precursors to the large and small rRNAs (23S and 16S). Processes some mRNAs, and tRNAs when they are encoded in the rRNA operon. Processes pre-crRNA and tracrRNA of type II CRISPR loci if present in the organism. This chain is Ribonuclease 3, found in Chlamydia felis (strain Fe/C-56) (Chlamydophila felis).